A 394-amino-acid polypeptide reads, in one-letter code: Probable peptidoglycan glycosyltransferase FtsW (394 aa).

Topologically, residues 1–27 (MSALRSVAGLLQRWLLPARPAGLYDRQ) are cytoplasmic. Residues 28–48 (LVVLALALMAVGLVIVASASI) form a helical membrane-spanning segment. The Periplasmic portion of the chain corresponds to 49–64 (PEGIAINNDPFMFVKR). Residues 65–85 (HGLFLVMALGISWFVLQVPMA) form a helical membrane-spanning segment. Residues 86 to 88 (RWQ) are Cytoplasmic-facing. The helical transmembrane segment at 89 to 109 (HYNGPMLVLAILMLVLVLLVG) threads the bilayer. Topologically, residues 110–123 (RSVNGSIRWLPLGP) are periplasmic. A helical transmembrane segment spans residues 124-144 (FNLQPAEFGKLALFVYLAGYL). The Cytoplasmic portion of the chain corresponds to 145-154 (VRRQSEVRER). Residues 155–175 (FIGFMKPMAVLFVVAILLLAQ) form a helical membrane-spanning segment. Position 176 (P176) is a topological domain, periplasmic. A helical transmembrane segment spans residues 177-197 (DLGSVVVMFVTSLGMLFLAGA). R198 is a topological domain (cytoplasmic). Residues 199 to 219 (LGQFIGLILVGVSAVVTLVIA) traverse the membrane as a helical segment. Topologically, residues 220-279 (EPYRMRRVTSFLDPWADPFGSGYQLTQSLMAFGRGSWFGEGLGNSIQKMEYLPEAHTDFV) are periplasmic. Residues 280 to 300 (FAILGEELGYAGVLGALFLIF) form a helical membrane-spanning segment. The Cytoplasmic portion of the chain corresponds to 301 to 322 (ALSFKALKLGHQALVAERLYEG). The chain crosses the membrane as a helical span at residues 323–343 (YLAIGIGIWFSFQTFVNVGAA). At 344–354 (SGMMPTKGLTL) the chain is on the periplasmic side. Residues 355-375 (PLVSYGGSSLIIMMVAVSMLV) form a helical membrane-spanning segment. The Cytoplasmic portion of the chain corresponds to 376 to 394 (RIDFELRQASAQARVREVS).

It belongs to the SEDS family. FtsW subfamily.

The protein resides in the cell inner membrane. The catalysed reaction is [GlcNAc-(1-&gt;4)-Mur2Ac(oyl-L-Ala-gamma-D-Glu-L-Lys-D-Ala-D-Ala)](n)-di-trans,octa-cis-undecaprenyl diphosphate + beta-D-GlcNAc-(1-&gt;4)-Mur2Ac(oyl-L-Ala-gamma-D-Glu-L-Lys-D-Ala-D-Ala)-di-trans,octa-cis-undecaprenyl diphosphate = [GlcNAc-(1-&gt;4)-Mur2Ac(oyl-L-Ala-gamma-D-Glu-L-Lys-D-Ala-D-Ala)](n+1)-di-trans,octa-cis-undecaprenyl diphosphate + di-trans,octa-cis-undecaprenyl diphosphate + H(+). It functions in the pathway cell wall biogenesis; peptidoglycan biosynthesis. Its function is as follows. Peptidoglycan polymerase that is essential for cell division. The chain is Probable peptidoglycan glycosyltransferase FtsW from Aeromonas salmonicida (strain A449).